The primary structure comprises 782 residues: Translation initiation factor IF-2 (782 aa).

A disordered region spans residues 47 to 196; the sequence is DNAIDGTNKK…TPPKPKELPE (150 aa). Residues 53–65 show a composition bias toward basic and acidic residues; the sequence is TNKKAEAPKKETT. The span at 66 to 81 shows a compositional bias: polar residues; it reads SNENGNSKGPNKPNMT. Residues 82 to 93 are compositionally biased toward low complexity; it reads NSNEKSNKPNKP. The span at 115 to 129 shows a compositional bias: polar residues; the sequence is KPANTSNQTQSSGNK. Residues 133–170 are compositionally biased toward low complexity; sequence GGQKRNNNNNSNRPGGGNPNRPGGNNRPNRGGNFNNKG. The 170-residue stretch at 283 to 452 folds into the tr-type G domain; the sequence is ERPPVVTIMG…LLVSEVEELK (170 aa). The G1 stretch occupies residues 292–299; the sequence is GHVDHGKT. Residue 292–299 coordinates GTP; it reads GHVDHGKT. Positions 317 to 321 are G2; the sequence is GITQH. Residues 338 to 341 are G3; the sequence is DTPG. Residues 338 to 342 and 392 to 395 each bind GTP; these read DTPGH and NKID. The interval 392 to 395 is G4; that stretch reads NKID. Residues 428–430 form a G5 region; sequence SAK.

It belongs to the TRAFAC class translation factor GTPase superfamily. Classic translation factor GTPase family. IF-2 subfamily.

It localises to the cytoplasm. One of the essential components for the initiation of protein synthesis. Protects formylmethionyl-tRNA from spontaneous hydrolysis and promotes its binding to the 30S ribosomal subunits. Also involved in the hydrolysis of GTP during the formation of the 70S ribosomal complex. This Listeria innocua serovar 6a (strain ATCC BAA-680 / CLIP 11262) protein is Translation initiation factor IF-2.